A 347-amino-acid chain; its full sequence is Purine-rich element-binding protein gamma (347 aa).

2 disordered regions span residues 1-34 (MERA…YPQA) and 133-169 (GHRQ…HPHS). Gly residues predominate over residues 9 to 24 (GGGGRGRGGKNVGGSG). Residues 51 to 293 (AGGAAEIQEL…GIFLKVSEVR (243 aa)) mediate DNA binding. Positions 134–146 (HRQEHGHSKEQGS) are enriched in basic and acidic residues. Residues Ser-160, Ser-163, and Ser-339 each carry the phosphoserine modification.

It belongs to the PUR DNA-binding protein family. As to expression, isoform 1 is expressed in testis and glioblastoma. Isoform 2 is expressed in fetal lung.

It is found in the nucleus. This is Purine-rich element-binding protein gamma (PURG) from Homo sapiens (Human).